A 956-amino-acid polypeptide reads, in one-letter code: Nitrogen regulatory protein NUT1 (956 aa).

Positions 1–12 (MNPTITEHDFRF) are enriched in basic and acidic residues. 5 disordered regions span residues 1 to 51 (MNPT…NDAQ), 120 to 222 (QQEE…PAAA), 240 to 262 (KTSI…FQVP), 348 to 373 (GQSI…SQVS), and 524 to 661 (TLPG…DAPT). A compositionally biased stretch (low complexity) spans 15–37 (RPAAPGRDPGSDSSDDPLPASLR). Composition is skewed to polar residues over residues 42–51 (DRQSAFNDAQ), 131–153 (PLKT…QKKS), 167–194 (SHGS…NAIS), and 208–217 (AAQSQFNPQS). Residues 588–613 (NASTTAIPNSQMQYEQQGVQGHTNSP) are compositionally biased toward polar residues. 2 stretches are compositionally biased toward low complexity: residues 623 to 633 (SGFSSVVHSRP) and 640 to 661 (SKNG…DAPT). The GATA-type zinc-finger motif lies at 663–687 (CTNCATQTTPLWRRNPEGQPLCNAC). The segment at 708–890 (KKRNRGSGSN…AATRPSGFGT (183 aa)) is disordered. Over residues 713-760 (GSGSNVPGATSGSRSKKGATSTAVSGTNTRKNSSLAISRTASTTNVQV) the composition is skewed to polar residues. Over residues 812–839 (VVPIAAAPPKNMPGPGAAAAARTVALGP) the composition is skewed to low complexity. Composition is skewed to polar residues over residues 849–863 (SPAN…NANH) and 872–881 (PENSTGSNEA).

Its subcellular location is the nucleus. Functionally, major nitrogen regulatory protein; activates expression of nitrogen-regulated genes. The protein is Nitrogen regulatory protein NUT1 (NUT1) of Pyricularia oryzae (strain 70-15 / ATCC MYA-4617 / FGSC 8958) (Rice blast fungus).